An 866-amino-acid polypeptide reads, in one-letter code: Replication factor C small subunit (866 aa).

Residues 183–313 (WLGYFIGDGH…VTYALAGFGI (131 aa)) form the DOD-type homing endonuclease domain.

The protein belongs to the activator 1 small subunits family. RfcS subfamily. Heteromultimer composed of small subunits (RfcS) and large subunits (RfcL). Post-translationally, this protein undergoes a protein self splicing that involves a post-translational excision of the intervening region (intein) followed by peptide ligation.

Its function is as follows. Part of the RFC clamp loader complex which loads the PCNA sliding clamp onto DNA. The chain is Replication factor C small subunit (rfcS) from Thermococcus kodakarensis (strain ATCC BAA-918 / JCM 12380 / KOD1) (Pyrococcus kodakaraensis (strain KOD1)).